The chain runs to 624 residues: LRR receptor kinase BAK1 (624 aa).

A signal peptide spans Met-1–Ala-25. Topologically, residues Asn-26–Gly-237 are extracellular. 4 LRR repeats span residues Leu-91–Leu-115, Asn-117–Leu-139, Leu-140–Ile-163, and Thr-164–Leu-188. N-linked (GlcNAc...) asparagine glycosylation is found at Asn-103, Asn-114, Asn-127, Asn-149, and Asn-175. The interval Thr-205–Thr-236 is disordered. The span at Pro-210–Val-227 shows a compositional bias: pro residues. Residues Ala-238–Phe-258 form a helical membrane-spanning segment. The Cytoplasmic portion of the chain corresponds to Ala-259 to Arg-624. A Protein kinase domain is found at Phe-301 to Gln-588. ATP is bound by residues Leu-307–Val-315 and Lys-329. Asp-428 (proton acceptor) is an active-site residue.

This sequence belongs to the protein kinase superfamily. Ser/Thr protein kinase family. As to quaternary structure, forms homodimers. Interacts with BRI1. Interacts with REM4.1. In terms of tissue distribution, expressed in developing lateral roots, shoot apex, leaf blades, lamina joints and flowers. Expressed at low levels in leaf sheaths and panicles.

It is found in the cell membrane. It carries out the reaction L-seryl-[protein] + ATP = O-phospho-L-seryl-[protein] + ADP + H(+). The catalysed reaction is L-threonyl-[protein] + ATP = O-phospho-L-threonyl-[protein] + ADP + H(+). LRR receptor kinase involved in defense response. Does not seem to be required specifically for XA21-mediated immunity or basal resistance to Xanthomonas oryzae pv. oryzae (Xoo), or immunity to Magnaporthe oryzae. Involved in brassinosteroid (BR) signaling pathway. Acts as a coreceptor of BRI1. Forms at the plasma membrane a receptor complex with BRI1 which is activated in response to brassinolide. Phosphorylates BRI1. Required for normal plant growth and leaf development. Possesses kinase activity in vitro. The chain is LRR receptor kinase BAK1 from Oryza sativa subsp. japonica (Rice).